We begin with the raw amino-acid sequence, 1555 residues long: Protein TASOR (1555 aa).

Disordered regions lie at residues 1–74 (MEEN…DKRA), 645–711 (QKKK…RQET), 744–773 (QNST…GQDQ), 870–911 (ALPN…TTPS), and 1390–1462 (NQGD…PTLD). Polar residues predominate over residues 35–47 (VQQTLKRTNSTES). The span at 61–71 (RRFQIPRKSRD) shows a compositional bias: basic residues. Over residues 667 to 688 (DRQSEKAWKHRKCEENVHHDNE) the composition is skewed to basic and acidic residues. Composition is skewed to polar residues over residues 692-702 (SAQSLISSLGG) and 744-761 (QNST…LSQA). The segment covering 888-904 (PLHETERQRPRHDRDYC) has biased composition (basic and acidic residues). The span at 1402–1417 (SKEEEDMSLDSEDDTP) shows a compositional bias: acidic residues. The span at 1448–1458 (ESPSTLNQGKT) shows a compositional bias: polar residues.

The protein belongs to the TASOR family. As to quaternary structure, component of the HUSH complex.

Its subcellular location is the nucleus. It is found in the chromosome. Functionally, component of the HUSH complex, a multiprotein complex that mediates epigenetic repression. The HUSH complex is recruited to genomic loci rich in H3K9me3 and is probably required to maintain transcriptional silencing by promoting further deposition of H3K9me3. In Xenopus laevis (African clawed frog), this protein is Protein TASOR.